The following is a 147-amino-acid chain: Globin, polymeric component P2 (147 aa).

One can recognise a Globin domain in the interval 2–146 (PLTADQVAAL…ISDALVAGLE (145 aa)). Heme b is bound at residue His96.

It belongs to the globin family. In terms of assembly, polymer.

In Glycera dibranchiata (Bloodworm), this protein is Globin, polymeric component P2.